Reading from the N-terminus, the 461-residue chain is Cysteine--tRNA ligase (461 aa).

Cys-28 contributes to the Zn(2+) binding site. The short motif at 30–40 (ITVYDLCHIGH) is the 'HIGH' region element. The Zn(2+) site is built by Cys-209, His-234, and Glu-238. Residues 266–270 (KMSKS) carry the 'KMSKS' region motif. Lys-269 lines the ATP pocket.

This sequence belongs to the class-I aminoacyl-tRNA synthetase family. As to quaternary structure, monomer. Zn(2+) is required as a cofactor.

Its subcellular location is the cytoplasm. The catalysed reaction is tRNA(Cys) + L-cysteine + ATP = L-cysteinyl-tRNA(Cys) + AMP + diphosphate. This Shigella boydii serotype 18 (strain CDC 3083-94 / BS512) protein is Cysteine--tRNA ligase.